The following is a 682-amino-acid chain: Potassium-transporting ATPase ATP-binding subunit (682 aa).

4 helical membrane-spanning segments follow: residues 34–54 (PVMF…IAMA), 62–82 (ALFS…ANFA), 219–239 (IALT…TATL), and 254–274 (VLVA…LSAI). Catalysis depends on Asp307, which acts as the 4-aspartylphosphate intermediate. Residues Asp344, Glu348, 377–384 (FTAQSRMS), and Lys395 each bind ATP. 2 residues coordinate Mg(2+): Asp518 and Asp522. Helical transmembrane passes span 588–608 (FAII…LNIM), 616–636 (AILS…PLAL), and 662–682 (LLVP…CGLV).

It belongs to the cation transport ATPase (P-type) (TC 3.A.3) family. Type IA subfamily. The system is composed of three essential subunits: KdpA, KdpB and KdpC.

The protein resides in the cell inner membrane. The enzyme catalyses K(+)(out) + ATP + H2O = K(+)(in) + ADP + phosphate + H(+). In terms of biological role, part of the high-affinity ATP-driven potassium transport (or Kdp) system, which catalyzes the hydrolysis of ATP coupled with the electrogenic transport of potassium into the cytoplasm. This subunit is responsible for energy coupling to the transport system and for the release of the potassium ions to the cytoplasm. The sequence is that of Potassium-transporting ATPase ATP-binding subunit from Escherichia coli O81 (strain ED1a).